Reading from the N-terminus, the 513-residue chain is Cytochrome P450 monooxygenase sthF (513 aa).

A run of 2 helical transmembrane segments spans residues 13-33 and 212-232; these read FPSL…YIFI and MLHP…IILL. Cys-452 is a binding site for heme.

The protein belongs to the cytochrome P450 family. Heme is required as a cofactor.

The protein resides in the membrane. The enzyme catalyses dehydroprobetaenone I + NADPH + O2 + H(+) = epoxybetaenone + NADP(+) + H2O. It carries out the reaction dehydroprobetaenone I + 3 NADPH + 3 O2 + 3 H(+) = betaenone C + 3 NADP(+) + 3 H2O. It catalyses the reaction probetaenone I + 3 NADPH + 3 O2 + 3 H(+) = betaenone B + 3 NADP(+) + 3 H2O. Its pathway is mycotoxin biosynthesis. Functionally, cytochrome P450 monooxygenase; part of the gene cluster that mediates the biosynthesis of the phytotoxin stemphyloxin II. The first step of the pathway is the synthesis of dehydroprobetaenone I by the polyketide synthase sthA and the enoyl reductase sthE via condensation of one acetyl-CoA starter unit with 7 malonyl-CoA units and 5 methylations. The C-terminal reductase (R) domain of sthA catalyzes the reductive release of the polyketide chain. Because sthA lacks a designated enoylreductase (ER) domain, the required activity is provided the enoyl reductase sthE. The short-chain dehydrogenase/reductase sthC then catalyzes reduction of dehydroprobetaenone I to probetaenone I. The cytochrome P450 monooxygenase sthF catalyzes successive epoxidation, oxidation (resulting from epoxide opening) and hydroxylation to install a tertiary alcohol in the decaline ring to yield betaenone C from dehydroprobetaenone I and betaenone B from probetaenone I. The FAD-linked oxidoreductase sthB is responsible for the conversion of betaenone C to betaenone A via an intramolecular aldol reaction between C-1 and C-17 to form the bridged tricyclic system in betaenone A. Finally, the cytochrome P450 monooxygenase sthD catalyzes the hydroxylation of C-15 to afford the final metabolite stemphyloxin II. The protein is Cytochrome P450 monooxygenase sthF of Phaeosphaeria nodorum (strain SN15 / ATCC MYA-4574 / FGSC 10173) (Glume blotch fungus).